A 265-amino-acid polypeptide reads, in one-letter code: uncharacterized protein (265 aa).

The tract at residues 122–145 (THYRDNGQTPPRDTRPHGGISLGG) is disordered.

This is an uncharacterized protein from Zymomonas mobilis subsp. mobilis (strain ATCC 31821 / ZM4 / CP4).